The following is a 482-amino-acid chain: Ribosomal protein uS12 methylthiotransferase RimO (482 aa).

Residues 2 to 115 (MKVHIITLGC…IAEVVETFQP (114 aa)) form the MTTase N-terminal domain. The [4Fe-4S] cluster site is built by Cys11, Cys47, Cys79, Cys177, Cys181, and Cys184. A Radical SAM core domain is found at 163 to 394 (RAVGPSAYLK…MRLQQRISRE (232 aa)). One can recognise a TRAM domain in the interval 397–466 (RRWLGRVVRV…DYDLWGDVVG (70 aa)).

Belongs to the methylthiotransferase family. RimO subfamily. Requires [4Fe-4S] cluster as cofactor.

The protein localises to the cytoplasm. The catalysed reaction is L-aspartate(89)-[ribosomal protein uS12]-hydrogen + (sulfur carrier)-SH + AH2 + 2 S-adenosyl-L-methionine = 3-methylsulfanyl-L-aspartate(89)-[ribosomal protein uS12]-hydrogen + (sulfur carrier)-H + 5'-deoxyadenosine + L-methionine + A + S-adenosyl-L-homocysteine + 2 H(+). Functionally, catalyzes the methylthiolation of an aspartic acid residue of ribosomal protein uS12. This chain is Ribosomal protein uS12 methylthiotransferase RimO, found in Roseiflexus castenholzii (strain DSM 13941 / HLO8).